The chain runs to 303 residues: N-acetyl-D-glucosamine kinase (303 aa).

ATP is bound by residues 4–11 (GFDVGGTK) and 133–140 (GFGGGLIY). Residues histidine 157, cysteine 177, cysteine 179, and cysteine 184 each coordinate Zn(2+).

The protein belongs to the ROK (NagC/XylR) family. NagK subfamily.

It catalyses the reaction N-acetyl-D-glucosamine + ATP = N-acetyl-D-glucosamine 6-phosphate + ADP + H(+). Its pathway is cell wall biogenesis; peptidoglycan recycling. Catalyzes the phosphorylation of N-acetyl-D-glucosamine (GlcNAc) derived from cell-wall degradation, yielding GlcNAc-6-P. This Vibrio vulnificus (strain CMCP6) protein is N-acetyl-D-glucosamine kinase.